A 140-amino-acid polypeptide reads, in one-letter code: Calcium-binding protein B (140 aa).

2 consecutive EF-hand domains span residues 38–73 and 74–109; these read ATLS…INQP and KTYL…KTSS. Ca(2+) is bound by residues Asp-51, Asn-53, Ser-55, Asp-57, and Glu-62.

This chain is Calcium-binding protein B (cbpB), found in Dictyostelium discoideum (Social amoeba).